The following is a 64-amino-acid chain: Sec-independent protein translocase protein TatA (64 aa).

A helical membrane pass occupies residues 10 to 30 (LVLILGIALIIFGPGKLPELG).

Belongs to the TatA/E family. As to quaternary structure, forms a complex with TatC.

The protein localises to the cell membrane. In terms of biological role, part of the twin-arginine translocation (Tat) system that transports large folded proteins containing a characteristic twin-arginine motif in their signal peptide across membranes. TatA could form the protein-conducting channel of the Tat system. This Alkaliphilus oremlandii (strain OhILAs) (Clostridium oremlandii (strain OhILAs)) protein is Sec-independent protein translocase protein TatA.